A 352-amino-acid chain; its full sequence is Molybdenum import ATP-binding protein ModC (352 aa).

In terms of domain architecture, ABC transporter spans 1–229 (MLELNFSQTL…SVMNPWLPKE (229 aa)). Residue 31 to 38 (GVSGAGKT) coordinates ATP. In terms of domain architecture, Mop spans 289–352 (QTSIRNVLRA…AQIKSVSITA (64 aa)).

The protein belongs to the ABC transporter superfamily. Molybdate importer (TC 3.A.1.8) family. In terms of assembly, the complex is composed of two ATP-binding proteins (ModC), two transmembrane proteins (ModB) and a solute-binding protein (ModA).

The protein resides in the cell inner membrane. The catalysed reaction is molybdate(out) + ATP + H2O = molybdate(in) + ADP + phosphate + H(+). Its function is as follows. Part of the ABC transporter complex ModABC involved in molybdenum import. Responsible for energy coupling to the transport system. The polypeptide is Molybdenum import ATP-binding protein ModC (Escherichia coli O6:K15:H31 (strain 536 / UPEC)).